The following is a 304-amino-acid chain: Tyrosine recombinase XerD (304 aa).

The Core-binding (CB) domain maps to 6-91 (EPWRKTLETF…AIRSFHKFLL (86 aa)). Positions 112–298 (YLPSVLTIEE…DRSFIKEVHK (187 aa)) constitute a Tyr recombinase domain. Active-site residues include Arg-155, Lys-179, His-250, Arg-253, and His-276. Tyr-285 functions as the O-(3'-phospho-DNA)-tyrosine intermediate in the catalytic mechanism.

The protein belongs to the 'phage' integrase family. XerD subfamily. Forms a cyclic heterotetrameric complex composed of two molecules of XerC and two molecules of XerD.

Its subcellular location is the cytoplasm. In terms of biological role, site-specific tyrosine recombinase, which acts by catalyzing the cutting and rejoining of the recombining DNA molecules. The XerC-XerD complex is essential to convert dimers of the bacterial chromosome into monomers to permit their segregation at cell division. It also contributes to the segregational stability of plasmids. The chain is Tyrosine recombinase XerD from Chlorobaculum tepidum (strain ATCC 49652 / DSM 12025 / NBRC 103806 / TLS) (Chlorobium tepidum).